The primary structure comprises 465 residues: Pancreatic triacylglycerol lipase (465 aa).

Positions 1 to 16 are cleaved as a signal peptide; the sequence is MLMLWTFAVLLGAVAG. 2 disulfides stabilise this stretch: Cys20-Cys26 and Cys107-Cys118. Ser169 acts as the Nucleophile in catalysis. Asp193 (charge relay system) is an active-site residue. 4 residues coordinate Ca(2+): Glu204, Arg207, Asp209, and Asp212. Cys254 and Cys278 form a disulfide bridge. His280 acts as the Charge relay system in catalysis. Disulfide bonds link Cys302–Cys313, Cys316–Cys321, and Cys449–Cys465. Residues 355-465 enclose the PLAT domain; sequence WRYQVTVTLS…EDVLLTLSPC (111 aa).

The protein belongs to the AB hydrolase superfamily. Lipase family. As to quaternary structure, forms a 1:1 stoichiometric complex with (pro)colipase/CLPS. As to expression, pancreas.

It localises to the secreted. It carries out the reaction a triacylglycerol + H2O = a diacylglycerol + a fatty acid + H(+). The catalysed reaction is 1,2,3-tri-(9Z-octadecenoyl)-glycerol + H2O = di-(9Z)-octadecenoylglycerol + (9Z)-octadecenoate + H(+). The enzyme catalyses 1,2,3-tributanoylglycerol + H2O = dibutanoylglycerol + butanoate + H(+). It catalyses the reaction all-trans-retinyl hexadecanoate + H2O = all-trans-retinol + hexadecanoate + H(+). It carries out the reaction 1,2-di-(9Z-octadecenoyl)-glycerol + H2O = (9Z-octadecenoyl)-glycerol + (9Z)-octadecenoate + H(+). With respect to regulation, inhibited by bile salts, is reactivated by (pro)colipase/CLPS. Plays an important role in fat metabolism. It preferentially splits the esters of long-chain fatty acids at positions 1 and 3, producing mainly 2-monoacylglycerol and free fatty acids, and shows considerably higher activity against insoluble emulsified substrates than against soluble ones. The protein is Pancreatic triacylglycerol lipase of Mus musculus (Mouse).